The primary structure comprises 431 residues: Trigger factor (431 aa).

The PPIase FKBP-type domain maps to 164–249 (GDIAVIDFKG…IKEIKRKELP (86 aa)).

It belongs to the FKBP-type PPIase family. Tig subfamily.

The protein resides in the cytoplasm. The enzyme catalyses [protein]-peptidylproline (omega=180) = [protein]-peptidylproline (omega=0). Involved in protein export. Acts as a chaperone by maintaining the newly synthesized protein in an open conformation. Functions as a peptidyl-prolyl cis-trans isomerase. The polypeptide is Trigger factor (Clostridium acetobutylicum (strain ATCC 824 / DSM 792 / JCM 1419 / IAM 19013 / LMG 5710 / NBRC 13948 / NRRL B-527 / VKM B-1787 / 2291 / W)).